The sequence spans 291 residues: Ribose-phosphate pyrophosphokinase (291 aa).

ATP contacts are provided by residues D34–E36 and R93–Q94. Mg(2+)-binding residues include H127 and D165. The active site involves K188. Residues R190, D216, and S220 to T224 each bind D-ribose 5-phosphate.

The protein belongs to the ribose-phosphate pyrophosphokinase family. Class III (archaeal) subfamily. Mg(2+) serves as cofactor.

The protein resides in the cytoplasm. It catalyses the reaction D-ribose 5-phosphate + ATP = 5-phospho-alpha-D-ribose 1-diphosphate + AMP + H(+). It functions in the pathway metabolic intermediate biosynthesis; 5-phospho-alpha-D-ribose 1-diphosphate biosynthesis; 5-phospho-alpha-D-ribose 1-diphosphate from D-ribose 5-phosphate (route I): step 1/1. Involved in the biosynthesis of the central metabolite phospho-alpha-D-ribosyl-1-pyrophosphate (PRPP) via the transfer of pyrophosphoryl group from ATP to 1-hydroxyl of ribose-5-phosphate (Rib-5-P). This Sulfolobus acidocaldarius (strain ATCC 33909 / DSM 639 / JCM 8929 / NBRC 15157 / NCIMB 11770) protein is Ribose-phosphate pyrophosphokinase.